The following is a 325-amino-acid chain: Interleukin-10 receptor subunit beta (325 aa).

An N-terminal signal peptide occupies residues 1–19; the sequence is MAWSLGSWLGGCLLVSALG. The Extracellular portion of the chain corresponds to 20 to 220; the sequence is MVPPPENVRM…QTTHDETVPS (201 aa). 2 consecutive Fibronectin type-III domains span residues 23–111 and 114–216; these read PPEN…VDDT and GPPG…THDE. Asn-49, Asn-68, Asn-102, and Asn-161 each carry an N-linked (GlcNAc...) asparagine glycan. A disulfide bridge links Cys-66 with Cys-74. The cysteines at positions 188 and 209 are disulfide-linked. The chain crosses the membrane as a helical span at residues 221-242; it reads WMVAVILMASVFMVCLALLGCF. Over 243–325 the chain is Cytoplasmic; sequence ALLWCVYKKT…GTPPGQGPQS (83 aa). The segment at 301-325 is disordered; the sequence is DSESGKQNPGDSCSLGTPPGQGPQS. The segment covering 305 to 315 has biased composition (polar residues); the sequence is GKQNPGDSCSL.

The protein belongs to the type II cytokine receptor family. Heterodimer with IFNLR1.

The protein localises to the membrane. In terms of biological role, shared cell surface receptor required for the activation of five class 2 cytokines: IL10, IL22, IL26, IL28, and IFNL1. The IFNLR1/IL10RB dimer is a receptor for the cytokine ligands IFNL2 and IFNL3 and mediates their antiviral activity. The ligand/receptor complex stimulate the activation of the JAK/STAT signaling pathway leading to the expression of IFN-stimulated genes (ISG), which contribute to the antiviral state. This chain is Interleukin-10 receptor subunit beta (IL10RB), found in Homo sapiens (Human).